We begin with the raw amino-acid sequence, 310 residues long: Methionyl-tRNA formyltransferase (310 aa).

111-114 (SLLP) contributes to the (6S)-5,6,7,8-tetrahydrofolate binding site.

Belongs to the Fmt family.

It catalyses the reaction L-methionyl-tRNA(fMet) + (6R)-10-formyltetrahydrofolate = N-formyl-L-methionyl-tRNA(fMet) + (6S)-5,6,7,8-tetrahydrofolate + H(+). Its function is as follows. Attaches a formyl group to the free amino group of methionyl-tRNA(fMet). The formyl group appears to play a dual role in the initiator identity of N-formylmethionyl-tRNA by promoting its recognition by IF2 and preventing the misappropriation of this tRNA by the elongation apparatus. This chain is Methionyl-tRNA formyltransferase, found in Rhodopseudomonas palustris (strain ATCC BAA-98 / CGA009).